The primary structure comprises 223 residues: Holliday junction branch migration complex subunit RuvA (223 aa).

The tract at residues 1 to 64 (MIGRIAGVIL…EDLLQLFGFP (64 aa)) is domain I. The domain II stretch occupies residues 65–143 (TLLEKEWHRL…AVMALGGALT (79 aa)). The flexible linker stretch occupies residues 144–169 (VDPGPLPEVELVEAAVPAPVPAKAAP). Residues 170-223 (SSAQATADALSALGNLGYAPSEAASAVAEAAAREPAAPTAALIRAALRLLAPKE) are domain III.

This sequence belongs to the RuvA family. As to quaternary structure, homotetramer. Forms an RuvA(8)-RuvB(12)-Holliday junction (HJ) complex. HJ DNA is sandwiched between 2 RuvA tetramers; dsDNA enters through RuvA and exits via RuvB. An RuvB hexamer assembles on each DNA strand where it exits the tetramer. Each RuvB hexamer is contacted by two RuvA subunits (via domain III) on 2 adjacent RuvB subunits; this complex drives branch migration. In the full resolvosome a probable DNA-RuvA(4)-RuvB(12)-RuvC(2) complex forms which resolves the HJ.

The protein localises to the cytoplasm. In terms of biological role, the RuvA-RuvB-RuvC complex processes Holliday junction (HJ) DNA during genetic recombination and DNA repair, while the RuvA-RuvB complex plays an important role in the rescue of blocked DNA replication forks via replication fork reversal (RFR). RuvA specifically binds to HJ cruciform DNA, conferring on it an open structure. The RuvB hexamer acts as an ATP-dependent pump, pulling dsDNA into and through the RuvAB complex. HJ branch migration allows RuvC to scan DNA until it finds its consensus sequence, where it cleaves and resolves the cruciform DNA. The polypeptide is Holliday junction branch migration complex subunit RuvA (Paracoccus denitrificans (strain Pd 1222)).